Consider the following 661-residue polypeptide: Zinc finger protein 81 (661 aa).

In terms of domain architecture, KRAB spans 21–92 (VSFEDVTVDF…EGEAPHQSCS (72 aa)). K266 participates in a covalent cross-link: Glycyl lysine isopeptide (Lys-Gly) (interchain with G-Cter in SUMO2). C2H2-type zinc fingers lie at residues 330-352 (YICT…EKTH), 358-380 (YKCN…QTTH), 386-408 (FECS…QKIH), 414-436 (HKCS…QRIH), 442-464 (YICT…QRIH), 470-492 (YECS…KRIH), 498-520 (YICT…QKSH), 526-548 (YICA…QTIH), 554-576 (YVCA…QRIH), 582-604 (YKCP…QRIH), 610-632 (YICA…QTIH), and 638-660 (YKCS…RNIH).

It belongs to the krueppel C2H2-type zinc-finger protein family.

It is found in the nucleus. In terms of biological role, may be involved in transcriptional regulation. This chain is Zinc finger protein 81 (ZNF81), found in Homo sapiens (Human).